Here is a 337-residue protein sequence, read N- to C-terminus: MEGKRPQFGNRHLDDPSRVFQHNAWDNVQWSEEQESAAHKKVQENSVQPLPLEKQEEYENKASNFWDDFYTIHENRFFKDRHWLFTEFPELSSRSSTQTGTESQEGQVMQLNGCQEETERADVENPFPGASATYRIMEVGCGVGNTVFPILQNNTDPGLFVYCCDFSSTAVELVKSNELYSPSRCFAFVHDVSDEQSSFPMPEHSLDVIVLIFVLSAINPAKMQNVISRLSSLLKPGGCILLRDYGRYDMAQLRFKKGRCLAENFYVRGDGTRVYFFTQDDLDTLFISAGLQKVQNTVDRRLQVNRGKQLTMYRVWIQCKYVKPQETELQNGGCSSE.

S-adenosyl-L-methionine-binding residues include Trp-66, Tyr-70, Gly-140, Asp-165, Asp-191, and Ile-212.

This sequence belongs to the methyltransferase superfamily. METL family. In terms of assembly, monomer.

The protein resides in the cytoplasm. The enzyme catalyses cytidine(32) in tRNA(Thr) + S-adenosyl-L-methionine = N(3)-methylcytidine(32) in tRNA(Thr) + S-adenosyl-L-homocysteine + H(+). It carries out the reaction cytidine(32) in tRNA(Arg)(CCU) + S-adenosyl-L-methionine = N(3)-methylcytidine(32) in tRNA(Arg)(CCU) + S-adenosyl-L-homocysteine + H(+). Functionally, S-adenosyl-L-methionine-dependent methyltransferase that mediates N(3)-methylcytidine modification of residue 32 of the tRNA anticodon loop of tRNA(Thr)(UGU) and tRNA(Arg)(CCU). N(3)-methylcytidine methylation by mettl2 requires the N6-threonylcarbamoylation of tRNA (t6A37) by the EKC/KEOPS complex as prerequisite. This is tRNA N(3)-cytidine methyltransferase METTL2 (mettl2) from Xenopus tropicalis (Western clawed frog).